The primary structure comprises 223 residues: Deoxyribose-phosphate aldolase (223 aa).

The active-site Proton donor/acceptor is Asp89. Catalysis depends on Lys152, which acts as the Schiff-base intermediate with acetaldehyde. The Proton donor/acceptor role is filled by Lys181.

This sequence belongs to the DeoC/FbaB aldolase family. DeoC type 1 subfamily.

It is found in the cytoplasm. The enzyme catalyses 2-deoxy-D-ribose 5-phosphate = D-glyceraldehyde 3-phosphate + acetaldehyde. The protein operates within carbohydrate degradation; 2-deoxy-D-ribose 1-phosphate degradation; D-glyceraldehyde 3-phosphate and acetaldehyde from 2-deoxy-alpha-D-ribose 1-phosphate: step 2/2. In terms of biological role, catalyzes a reversible aldol reaction between acetaldehyde and D-glyceraldehyde 3-phosphate to generate 2-deoxy-D-ribose 5-phosphate. This Bacillus cereus (strain B4264) protein is Deoxyribose-phosphate aldolase.